We begin with the raw amino-acid sequence, 73 residues long: MLKKLYSKKGQVSMEMGILVASAVAVAAIASYFYAVNVKYSDTHAGETAKNTSNALINVTENVCGNISEITIP.

A propeptide spanning residues methionine 1–glycine 10 is cleaved from the precursor. The short motif at glutamine 11 to leucine 19 is the QXSXEXXXL element.

The N-terminus is probably cleaved by the prepilin peptidase EppA, which recognizes the class III signal sequence.

It localises to the secreted. It is found in the cell surface. The protein resides in the fimbrium. This chain is Probable minor pilin MMP0528, found in Methanococcus maripaludis (strain DSM 14266 / JCM 13030 / NBRC 101832 / S2 / LL).